The following is a 382-amino-acid chain: Carbamoyl phosphate synthase small chain (382 aa).

The tract at residues 1 to 189 (MIKSALLVLE…GLPEAKSEDD (189 aa)) is CPSase. The L-glutamine site is built by Ser47, Gly241, and Gly243. Residues 193 to 380 (HVVAYDFGAK…IELIEQYRQS (188 aa)) form the Glutamine amidotransferase type-1 domain. Cys269 serves as the catalytic Nucleophile. Leu270, Gln273, Asn311, Gly313, and Phe314 together coordinate L-glutamine. Catalysis depends on residues His353 and Glu355.

This sequence belongs to the CarA family. Composed of two chains; the small (or glutamine) chain promotes the hydrolysis of glutamine to ammonia, which is used by the large (or ammonia) chain to synthesize carbamoyl phosphate. Tetramer of heterodimers (alpha,beta)4.

It carries out the reaction hydrogencarbonate + L-glutamine + 2 ATP + H2O = carbamoyl phosphate + L-glutamate + 2 ADP + phosphate + 2 H(+). The catalysed reaction is L-glutamine + H2O = L-glutamate + NH4(+). It functions in the pathway amino-acid biosynthesis; L-arginine biosynthesis; carbamoyl phosphate from bicarbonate: step 1/1. The protein operates within pyrimidine metabolism; UMP biosynthesis via de novo pathway; (S)-dihydroorotate from bicarbonate: step 1/3. Small subunit of the glutamine-dependent carbamoyl phosphate synthetase (CPSase). CPSase catalyzes the formation of carbamoyl phosphate from the ammonia moiety of glutamine, carbonate, and phosphate donated by ATP, constituting the first step of 2 biosynthetic pathways, one leading to arginine and/or urea and the other to pyrimidine nucleotides. The small subunit (glutamine amidotransferase) binds and cleaves glutamine to supply the large subunit with the substrate ammonia. This is Carbamoyl phosphate synthase small chain from Salmonella typhimurium (strain LT2 / SGSC1412 / ATCC 700720).